Reading from the N-terminus, the 357-residue chain is Thiamine thiazole synthase, chloroplastic (357 aa).

Substrate-binding positions include A102, 123 to 124 (EQ), G131, and V196. The residue at position 233 (C233) is a 2,3-didehydroalanine (Cys). Residues D235, H250, M304, and 314–316 (RMG) each bind substrate.

The protein belongs to the THI4 family. Homooctamer. The cofactor is Fe cation. During the catalytic reaction, a sulfide is transferred from Cys-233 to a reaction intermediate, generating a dehydroalanine residue.

It is found in the plastid. Its subcellular location is the chloroplast. It catalyses the reaction [ADP-thiazole synthase]-L-cysteine + glycine + NAD(+) = [ADP-thiazole synthase]-dehydroalanine + ADP-5-ethyl-4-methylthiazole-2-carboxylate + nicotinamide + 3 H2O + 2 H(+). Its function is as follows. Involved in biosynthesis of the thiamine precursor thiazole. Catalyzes the conversion of NAD and glycine to adenosine diphosphate 5-(2-hydroxyethyl)-4-methylthiazole-2-carboxylic acid (ADT), an adenylated thiazole intermediate. The reaction includes an iron-dependent sulfide transfer from a conserved cysteine residue of the protein to a thiazole intermediate. The enzyme can only undergo a single turnover, which suggests it is a suicide enzyme. May have additional roles in adaptation to various stress conditions and in DNA damage tolerance. This is Thiamine thiazole synthase, chloroplastic from Chlamydomonas reinhardtii (Chlamydomonas smithii).